Consider the following 193-residue polypeptide: Probable nicotinate-nucleotide adenylyltransferase (193 aa).

This sequence belongs to the NadD family.

It carries out the reaction nicotinate beta-D-ribonucleotide + ATP + H(+) = deamido-NAD(+) + diphosphate. It functions in the pathway cofactor biosynthesis; NAD(+) biosynthesis; deamido-NAD(+) from nicotinate D-ribonucleotide: step 1/1. Catalyzes the reversible adenylation of nicotinate mononucleotide (NaMN) to nicotinic acid adenine dinucleotide (NaAD). This Fusobacterium nucleatum subsp. nucleatum (strain ATCC 25586 / DSM 15643 / BCRC 10681 / CIP 101130 / JCM 8532 / KCTC 2640 / LMG 13131 / VPI 4355) protein is Probable nicotinate-nucleotide adenylyltransferase.